A 195-amino-acid chain; its full sequence is Morphogenetic protein (195 aa).

Its function is as follows. Assembly factor active in membrane morphogenesis. This chain is Morphogenetic protein (P12), found in Pseudomonas phage phi6 (Bacteriophage phi-6).